Reading from the N-terminus, the 67-residue chain is uncharacterized protein (67 aa).

This is an uncharacterized protein from Vaccinia virus (strain Copenhagen) (VACV).